The following is a 279-amino-acid chain: uncharacterized protein (279 aa).

Low complexity-rich tracts occupy residues 1 to 25 (MNENNKNNSSEDLNNNNNNNNNNNN), 86 to 151 (PSQS…NGNN), and 232 to 250 (NKNNNNNNNNDNNNNDDNN). Disordered regions lie at residues 1-27 (MNENNKNNSSEDLNNNNNNNNNNNNIK), 83-153 (NLFP…NNID), and 213-260 (QSVN…KVKS).

This is an uncharacterized protein from Dictyostelium discoideum (Social amoeba).